Reading from the N-terminus, the 453-residue chain is Presenilin-like protein At1g08700 (453 aa).

Over 1 to 8 (MESSILDS) the chain is Cytoplasmic. Residues 9 to 29 (LGVEIIGVMAPVSICMFLVVL) traverse the membrane as a helical segment. At 30–68 (LTYSLSVTSDPQIRSAANLIYIENPSDSTTVKLEGSLAN) the chain is on the lumenal side. Residues 69-89 (AIVFVVLIAAVTFILVLLFYY) form a helical membrane-spanning segment. Residues 90–103 (NFTNFLKHYMRFSA) lie on the Cytoplasmic side of the membrane. The chain crosses the membrane as a helical span at residues 104 to 124 (FFVLGTMGGAIFLSIIQHFSI). The Lumenal segment spans residues 125–132 (PVDSITCF). The chain crosses the membrane as a helical span at residues 133-153 (ILLFNFTILGTLSVFAGGIPI). The Cytoplasmic segment spans residues 154-159 (VLRQCY). The next 2 helical transmembrane spans lie at 160-180 (MVVM…WTTW) and 181-201 (FILV…GGPL). The active site involves Asp-190. Residues 202-369 (KLLVELASSR…VVDISNRGIK (168 aa)) lie on the Cytoplasmic side of the membrane. Disordered stretches follow at residues 226 to 248 (VSSG…GGGV) and 292 to 329 (IGNG…DRES). A compositionally biased stretch (low complexity) spans 227–240 (SSGNQRRNRGSSLR). Phosphoserine is present on Ser-296. The segment covering 309 to 320 (PSASEHSTSVGT) has biased composition (polar residues). Residues 370-390 (LGLGDFIFYSVLVGRAAMYDL) form a helical membrane-spanning segment. Asp-374 is an active-site residue. Over 391–392 (MT) the chain is Lumenal. Residues 393-413 (VYACYLAIISGLGCTLILLSV) traverse the membrane as a helical segment. The Cytoplasmic segment spans residues 414-417 (YNRA). Positions 418–438 (LPALPISIMLGVVFYFLTRLL) form an intramembrane region, helical. Residues 419–421 (PAL) carry the PAL motif. The Cytoplasmic segment spans residues 439–453 (MEPFVVGVTTNLMMF).

It belongs to the peptidase A22A family. Homodimer. Probable component of the gamma-secretase complex, a complex composed of a presenilin homodimer, nicastrin, APH1 and PEN2.

The protein resides in the endoplasmic reticulum membrane. The protein localises to the golgi apparatus membrane. Its function is as follows. Probable subunit of the gamma-secretase complex, an endoprotease complex that catalyzes the intramembrane cleavage of integral membrane proteins such as Notch receptors. This chain is Presenilin-like protein At1g08700, found in Arabidopsis thaliana (Mouse-ear cress).